The sequence spans 194 residues: NADH-quinone oxidoreductase subunit B (194 aa).

[4Fe-4S] cluster is bound by residues cysteine 72, cysteine 73, cysteine 137, and cysteine 167.

Belongs to the complex I 20 kDa subunit family. NDH-1 is composed of 14 different subunits. Subunits NuoB, C, D, E, F, and G constitute the peripheral sector of the complex. It depends on [4Fe-4S] cluster as a cofactor.

Its subcellular location is the cell inner membrane. The catalysed reaction is a quinone + NADH + 5 H(+)(in) = a quinol + NAD(+) + 4 H(+)(out). NDH-1 shuttles electrons from NADH, via FMN and iron-sulfur (Fe-S) centers, to quinones in the respiratory chain. Couples the redox reaction to proton translocation (for every two electrons transferred, four hydrogen ions are translocated across the cytoplasmic membrane), and thus conserves the redox energy in a proton gradient. The sequence is that of NADH-quinone oxidoreductase subunit B from Granulibacter bethesdensis (strain ATCC BAA-1260 / CGDNIH1).